The chain runs to 120 residues: A-type ATP synthase subunit F (120 aa).

The protein belongs to the V-ATPase F subunit family. In terms of assembly, has multiple subunits with at least A(3), B(3), C, D, E, F, H, I and proteolipid K(x).

The protein localises to the cell membrane. Functionally, component of the A-type ATP synthase that produces ATP from ADP in the presence of a proton gradient across the membrane. This chain is A-type ATP synthase subunit F, found in Halobacterium salinarum (strain ATCC 29341 / DSM 671 / R1).